Here is a 188-residue protein sequence, read N- to C-terminus: MQSNSSSFPDWHGTTILAVRKNGSTVIAGDGQVSMGPTVVKGNARKVRRLAGGKVVAGFAGATADAFTLIERLEAKLEQYPDQLARACVDLAKDWRTDRYLRRLEAMLLVADKTAIYTVTGVGDVLEPGESLGGGAVAAIGSGGNYALAAGKALIDLDLSAEDIARKAMGIAAEICVYTNGNLTVESL.

The active site involves T14. The Na(+) site is built by A173, C176, and T179.

This sequence belongs to the peptidase T1B family. HslV subfamily. As to quaternary structure, a double ring-shaped homohexamer of HslV is capped on each side by a ring-shaped HslU homohexamer. The assembly of the HslU/HslV complex is dependent on binding of ATP.

It is found in the cytoplasm. It carries out the reaction ATP-dependent cleavage of peptide bonds with broad specificity.. With respect to regulation, allosterically activated by HslU binding. Its function is as follows. Protease subunit of a proteasome-like degradation complex believed to be a general protein degrading machinery. The sequence is that of ATP-dependent protease subunit HslV from Caulobacter vibrioides (strain ATCC 19089 / CIP 103742 / CB 15) (Caulobacter crescentus).